The primary structure comprises 164 residues: Anterior gradient protein 2-B (164 aa).

The N-terminal stretch at 1 to 20 (MESVLKSLFVLLVATSFTLA) is a signal peptide. 2 consecutive short sequence motifs (homodimer stabilization; interchain) follow at residues 34 to 43 (SRGWGDNLEW) and 49 to 56 (EGLYKAKA).

The protein belongs to the AGR family. Monomer and homodimer.

The protein localises to the secreted. The protein resides in the endoplasmic reticulum. This is Anterior gradient protein 2-B (agr2-b) from Xenopus laevis (African clawed frog).